We begin with the raw amino-acid sequence, 865 residues long: Alanine--tRNA ligase (865 aa).

Zn(2+)-binding residues include His-554, His-558, Cys-656, and His-660.

This sequence belongs to the class-II aminoacyl-tRNA synthetase family. Requires Zn(2+) as cofactor.

It localises to the cytoplasm. It catalyses the reaction tRNA(Ala) + L-alanine + ATP = L-alanyl-tRNA(Ala) + AMP + diphosphate. In terms of biological role, catalyzes the attachment of alanine to tRNA(Ala) in a two-step reaction: alanine is first activated by ATP to form Ala-AMP and then transferred to the acceptor end of tRNA(Ala). Also edits incorrectly charged Ser-tRNA(Ala) and Gly-tRNA(Ala) via its editing domain. This chain is Alanine--tRNA ligase, found in Francisella tularensis subsp. tularensis (strain FSC 198).